The sequence spans 60 residues: Ixodegrin YY-39 (60 aa).

A signal peptide spans 1-21 (MNAALIAALLILGALTLDATA). The Cell attachment site motif lies at 49-51 (RGD).

The protein belongs to the ixodegrin family. Post-translationally, contains 3 disulfide bonds. Expressed in salivary glands.

Its subcellular location is the secreted. Tick salivary platelet aggregation inhibitor that plays an important part in the anti-hemostatic strategy of ticks. Inhibits platelet aggregation induced by ADP, thrombin and thromboxane A2 (TXA2). Blocks platelet adhesion to soluble collagen (most probably through the binding to alpha-2/beta-1 integrin (ITGA2/ITGB1)) and binds to purified glycoprotein IIb/IIIa (ITGA2B/ITGB3) in a dose-dependent manner. In vivo, reduces thrombus weight effectively in a rat arteriovenous shunt model and inhibits thrombosis in a carrageenan-induced mouse tail thrombosis model. The polypeptide is Ixodegrin YY-39 (Ixodes scapularis (Black-legged tick)).